Here is a 338-residue protein sequence, read N- to C-terminus: Peptidyl-prolyl cis-trans isomerase cyp11 (338 aa).

A PPIase cyclophilin-type domain is found at 7 to 172 (FFDIDVDGNR…HNVMIANCGE (166 aa)). A disordered region spans residues 186–338 (ASAVSDESED…RGRFKYRPTY (153 aa)). The span at 208 to 218 (DDSSSDEDSEE) shows a compositional bias: acidic residues. Positions 223–242 (RTKKKRSRKHSKKDKKKKKR) are enriched in basic residues. Over residues 243–309 (ESSNRKRSPE…PEKRSSERRV (67 aa)) the composition is skewed to basic and acidic residues. The segment covering 329-338 (RGRFKYRPTY) has biased composition (basic residues).

Belongs to the cyclophilin-type PPIase family.

The catalysed reaction is [protein]-peptidylproline (omega=180) = [protein]-peptidylproline (omega=0). Functionally, PPIases accelerate the folding of proteins. It catalyzes the cis-trans isomerization of proline imidic peptide bonds in oligopeptides. The chain is Peptidyl-prolyl cis-trans isomerase cyp11 (cyp11) from Rhizopus delemar (strain RA 99-880 / ATCC MYA-4621 / FGSC 9543 / NRRL 43880) (Mucormycosis agent).